The primary structure comprises 508 residues: Photosystem II CP47 reaction center protein (508 aa).

Helical transmembrane passes span 21-36 (SVHI…WAGS), 101-115 (IVFS…IWHW), 140-156 (GIHL…FGAF), 203-218 (IAAG…FHLS), 237-252 (VLSS…AFVV), and 457-472 (SFAL…HGAR).

The protein belongs to the PsbB/PsbC family. PsbB subfamily. PSII is composed of 1 copy each of membrane proteins PsbA, PsbB, PsbC, PsbD, PsbE, PsbF, PsbH, PsbI, PsbJ, PsbK, PsbL, PsbM, PsbT, PsbX, PsbY, PsbZ, Psb30/Ycf12, at least 3 peripheral proteins of the oxygen-evolving complex and a large number of cofactors. It forms dimeric complexes. The cofactor is Binds multiple chlorophylls. PSII binds additional chlorophylls, carotenoids and specific lipids..

It is found in the plastid. The protein localises to the chloroplast thylakoid membrane. Its function is as follows. One of the components of the core complex of photosystem II (PSII). It binds chlorophyll and helps catalyze the primary light-induced photochemical processes of PSII. PSII is a light-driven water:plastoquinone oxidoreductase, using light energy to abstract electrons from H(2)O, generating O(2) and a proton gradient subsequently used for ATP formation. The protein is Photosystem II CP47 reaction center protein of Gossypium barbadense (Sea Island cotton).